The primary structure comprises 460 residues: Malonyl-coenzyme A:anthocyanin 3-O-glucoside-6''-O-malonyltransferase (460 aa).

Active-site proton acceptor residues include H173 and D400.

It belongs to the plant acyltransferase family.

It carries out the reaction an anthocyanidin 3-O-beta-D-glucoside + malonyl-CoA = an anthocyanidin 3-O-(6-O-malonyl-beta-D-glucoside) + CoA. Completely inhibited by 5 mM N-ethylmaleimide or 0.1 mM Cu(2+). Partially inhibited by 0.1 mM Fe(2+) or 0.1 mM Hg(2+). Functionally, catalyzes the transfer of the malonyl group from malonyl-CoA to pelargonidin 3-O-glucoside to produce pelargonidin 3-O-6''-O-malonylglucoside. Can also transfer the malonyl group from malonyl-CoA to cyanidin 3-O-glucoside, delphinidin 3-O-glucoside and quercetin 3-O-glucoside. In Dahlia pinnata (Pinnate dahlia), this protein is Malonyl-coenzyme A:anthocyanin 3-O-glucoside-6''-O-malonyltransferase.